Reading from the N-terminus, the 693-residue chain is Putative tyrosinase-like protein tyr-3 (693 aa).

The first 18 residues, 1 to 18 (MIRYIILLVYFLIFEVNS), serve as a signal peptide directing secretion. 6 residues coordinate Cu cation: His-142, His-152, His-161, His-281, His-285, and His-308. 4 ShKT domains span residues 472–506 (CFNENECCGPWSAKGECQKNPVYMNVWCKASCRQC), 516–550 (CSDRHTNCAMWSRSGECNKNPLWMSENCRSSCQKC), 591–625 (CYNEDQCCPIWAQRGQCRSNPGYMTCQCKVSCGVC), and 634–667 (CADYHYDCAAWARRGECLKNKWMPENCRRSCNTC). Intrachain disulfides connect Cys-472–Cys-506, Cys-479–Cys-499, Cys-488–Cys-503, Cys-516–Cys-550, Cys-523–Cys-543, Cys-532–Cys-547, Cys-591–Cys-625, Cys-598–Cys-618, Cys-607–Cys-622, Cys-634–Cys-667, Cys-641–Cys-660, and Cys-650–Cys-664.

The protein belongs to the tyrosinase family. Requires Cu(2+) as cofactor.

The chain is Putative tyrosinase-like protein tyr-3 (tyr-3) from Caenorhabditis elegans.